The primary structure comprises 232 residues: Large ribosomal subunit protein uL1 (232 aa).

This sequence belongs to the universal ribosomal protein uL1 family. Part of the 50S ribosomal subunit.

In terms of biological role, binds directly to 23S rRNA. The L1 stalk is quite mobile in the ribosome, and is involved in E site tRNA release. Its function is as follows. Protein L1 is also a translational repressor protein, it controls the translation of the L11 operon by binding to its mRNA. The protein is Large ribosomal subunit protein uL1 of Bacillus cereus (strain ATCC 14579 / DSM 31 / CCUG 7414 / JCM 2152 / NBRC 15305 / NCIMB 9373 / NCTC 2599 / NRRL B-3711).